The sequence spans 1072 residues: Zn(2)-C6 fungal-type transcription factor FTF2 (1072 aa).

Residues 179 to 206 constitute a DNA-binding region (zn(2)-C6 fungal-type); the sequence is CIACRRKKIRCSGEKPACKHCLRSRIPC.

It is found in the nucleus. In terms of biological role, zn(2)-C6 fungal-type transcription factor that has a role in conidia production and also in plant colonization. Acts as a negative regulator of the production of macroconidia and is required for full virulence and the positive regulation of SIX effectors. In addition, FTF2 is also involved in the regulation of class II hydrophobins FOXG_02746 and FOXG_02748 likely required for plant colonization. This chain is Zn(2)-C6 fungal-type transcription factor FTF2, found in Fusarium oxysporum f. sp. lycopersici (strain 4287 / CBS 123668 / FGSC 9935 / NRRL 34936) (Fusarium vascular wilt of tomato).